The following is a 299-amino-acid chain: Coenzyme PQQ synthesis protein B (299 aa).

It belongs to the PqqB family.

The protein operates within cofactor biosynthesis; pyrroloquinoline quinone biosynthesis. May be involved in the transport of PQQ or its precursor to the periplasm. This chain is Coenzyme PQQ synthesis protein B, found in Methylorubrum extorquens (strain PA1) (Methylobacterium extorquens).